Consider the following 262-residue polypeptide: Flap endonuclease Xni (262 aa).

Asp-105 is a binding site for Mg(2+). Residues 164–251 (SQFLDLMALA…NINLKDFRAN (88 aa)) enclose the 5'-3' exonuclease domain. K(+)-binding residues include Leu-172, Ala-173, Pro-181, Ile-183, and Ile-186. Residues 185 to 190 (GIGPKS) form an interaction with DNA region.

This sequence belongs to the Xni family. The cofactor is Mg(2+). It depends on K(+) as a cofactor.

Has flap endonuclease activity. During DNA replication, flap endonucleases cleave the 5'-overhanging flap structure that is generated by displacement synthesis when DNA polymerase encounters the 5'-end of a downstream Okazaki fragment. In Shewanella putrefaciens (strain CN-32 / ATCC BAA-453), this protein is Flap endonuclease Xni.